Here is a 529-residue protein sequence, read N- to C-terminus: Peptide chain release factor 3 (529 aa).

The 270-residue stretch at 11–280 (AKRRTFAIIS…GLVEWAPAPM (270 aa)) folds into the tr-type G domain. GTP-binding positions include 20–27 (SHPDAGKT), 88–92 (DTPGH), and 142–145 (NKLD).

The protein belongs to the TRAFAC class translation factor GTPase superfamily. Classic translation factor GTPase family. PrfC subfamily.

The protein localises to the cytoplasm. Functionally, increases the formation of ribosomal termination complexes and stimulates activities of RF-1 and RF-2. It binds guanine nucleotides and has strong preference for UGA stop codons. It may interact directly with the ribosome. The stimulation of RF-1 and RF-2 is significantly reduced by GTP and GDP, but not by GMP. The sequence is that of Peptide chain release factor 3 from Shigella dysenteriae serotype 1 (strain Sd197).